Consider the following 131-residue polypeptide: Protein TAP2 (131 aa).

The signal sequence occupies residues 1–22 (MAKSSPTYTVLFLLGLLALSTA). The disordered stretch occupies residues 75–101 (ARSGGETDVKKMEGSMPDQGKTAGRDQ).

As to expression, tapetum of anthers.

In Antirrhinum majus (Garden snapdragon), this protein is Protein TAP2 (TAP2).